The primary structure comprises 182 residues: MINIPTAILCRLGARSSISRSFGTSIVTKSEAKTPIQKFGWEYLLKQRSKNRPIAPHLTVYQPQLTWMLSGFHRISGCVMAGTLLVGGIGFAVLPFDFTAFVDFIRSWNLPCAVTAVFKYIIAFPIIFHTLNGIRFLGFDLAKGVNNVGQIYKSGYLVSGLSAILALAIVFNSCQNKSNKTA.

Residues 65 to 94 form a helical membrane-spanning segment; sequence LTWMLSGFHRISGCVMAGTLLVGGIGFAVL. Over 95 to 114 the chain is Mitochondrial intermembrane; that stretch reads PFDFTAFVDFIRSWNLPCAV. A helical transmembrane segment spans residues 115-139; that stretch reads TAVFKYIIAFPIIFHTLNGIRFLGF. Heme is bound at residue H129. The Mitochondrial matrix segment spans residues 140–147; that stretch reads DLAKGVNN. A helical transmembrane segment spans residues 148–169; it reads VGQIYKSGYLVSGLSAILALAI. Over 170 to 172 the chain is Mitochondrial intermembrane; sequence VFN.

The protein belongs to the cytochrome b560 family. Component of complex II composed of four subunits: a flavoprotein (FP), iron-sulfur protein (IP), and a cytochrome b560 composed of two integral membrane proteins. Heme is required as a cofactor.

The protein resides in the mitochondrion inner membrane. It functions in the pathway carbohydrate metabolism; tricarboxylic acid cycle. Membrane-anchoring subunit of succinate dehydrogenase (SDH) that is involved in complex II of the mitochondrial electron transport chain and is responsible for transferring electrons from succinate to ubiquinone (coenzyme Q). Mediates resistance to enteropathogenic E.coli infection. This is Succinate dehydrogenase cytochrome b560 subunit, mitochondrial (mev-1) from Caenorhabditis elegans.